A 350-amino-acid polypeptide reads, in one-letter code: MNEEQKKALTAVLTQLDKQFGKGTVMRLGEQVAAHDIQAISTGSLTLDIALGIGGLPKGRIVEIYGPESSGKTTMMLHVIAEAQKNGGTAAFIDAEHALDPIYARKLGVNTDDLYVTQPDTGEQALEICDALVRSGAFDVIVVDSVAALTPKAEIEGEMGDSHVGLQARLMSQALRKLTGNIKRANTLVVFINQIRMKIGVMFGSPETTTGGNALKFYASVRMDIRRIGSIKEGDEVLGNETRVKVVKNKVAPPFKQAEFDILYGQGVSREGEIIQLAVNADIMQKSGAWYSYRDEKIGQGKEKVRLYLKEHPDVAQEIETKIREKFIGGELHLPDAAGDEIDTSINDEE.

66 to 73 (GPESSGKT) is a binding site for ATP.

This sequence belongs to the RecA family.

Its subcellular location is the cytoplasm. Functionally, can catalyze the hydrolysis of ATP in the presence of single-stranded DNA, the ATP-dependent uptake of single-stranded DNA by duplex DNA, and the ATP-dependent hybridization of homologous single-stranded DNAs. It interacts with LexA causing its activation and leading to its autocatalytic cleavage. In Dichelobacter nodosus (strain VCS1703A), this protein is Protein RecA.